Consider the following 72-residue polypeptide: Large ribosomal subunit protein bL31 (72 aa).

Cys-17, Cys-19, Cys-37, and Cys-40 together coordinate Zn(2+).

This sequence belongs to the bacterial ribosomal protein bL31 family. Type A subfamily. In terms of assembly, part of the 50S ribosomal subunit. Zn(2+) is required as a cofactor.

Binds the 23S rRNA. This chain is Large ribosomal subunit protein bL31, found in Clostridium botulinum (strain ATCC 19397 / Type A).